Consider the following 216-residue polypeptide: Urease accessory protein UreG (216 aa).

Residue 25–32 participates in GTP binding; sequence GPVGSGKT.

This sequence belongs to the SIMIBI class G3E GTPase family. UreG subfamily. Homodimer. UreD, UreF and UreG form a complex that acts as a GTP-hydrolysis-dependent molecular chaperone, activating the urease apoprotein by helping to assemble the nickel containing metallocenter of UreC. The UreE protein probably delivers the nickel.

The protein localises to the cytoplasm. Functionally, facilitates the functional incorporation of the urease nickel metallocenter. This process requires GTP hydrolysis, probably effectuated by UreG. In Burkholderia mallei (strain NCTC 10247), this protein is Urease accessory protein UreG.